Reading from the N-terminus, the 202-residue chain is Alpha-latrotoxin-Lm1a (202 aa).

10 ANK repeats span residues 95 to 109, 110 to 120, 122 to 132, 133 to 138, 142 to 161, 163 to 170, 171 to 182, Lys184, 185 to 191, and 193 to 202; these read LYNAASNPDSAVGFK, LMESPEININE, NDWPVASTLLR, SSNVNV, NSDTPLNLAYFIDQGADINT, NGHLNIVK, YLVEEEDLSVDG, YGIDMTI, and TALDIATDLK. The interval 175 to 181 is 4C4.1 epitope; sequence EEDLSVD.

Belongs to the cationic peptide 01 (latrotoxin) family. 03 (alpha-latrotoxin) subfamily. Homotetramer in membranes. Post-translationally, processed by furin-like proteases at both the N- and C-termini. Contains 1 disulfide bond. As to expression, expressed in venom gland, cephalothorax, and abdomen tissues from both males and females.

Its subcellular location is the secreted. It is found in the target cell membrane. In terms of biological role, presynaptic neurotoxin that causes massive release of neurotransmitters from vertebrate (but not invertebrate) nerve terminals and endocrine cells via a complex mechanism involving activation of receptor(s) and toxin insertion into the plasma membrane with subsequent pore formation. Binds to neurexin-1-alpha (NRXN1) in a calcium dependent manner, adhesion G protein-coupled receptor L1 (ADGRL1, also termed latrophilin-1 and calcium-independent receptor of latrotoxin (CIRL)), and receptor-type tyrosine-protein phosphatase S (PTPRS), also termed PTP sigma. NRXN1 and PTPRS are suggested to provide a platform for binding and subsequent pore formation events. In contrast, binding to ADGRL1 does not involve oligomerization and channel formation, but direct downstream stimulation of the synaptic fusion machinery. The polypeptide is Alpha-latrotoxin-Lm1a (Latrodectus mactans (Black widow spider)).